The sequence spans 793 residues: Kinesin-associated protein 3 (793 aa).

Serine 60 is modified (phosphoserine). Over residues 103 to 119 the composition is skewed to basic and acidic residues; the sequence is LPGKEKKEKSSKPKDPP. The disordered stretch occupies residues 103–123; it reads LPGKEKKEKSSKPKDPPPFEG. 5 ARM repeats span residues 333–373, 374–412, 494–533, 578–620, and 621–662; these read FMEN…NLSF, DTGLRNKMVQVGLLPKLTALLGNENYKQIAMCVLYHISM, DGPTKNLFIDYVGDLAAQISSDEEEEFVIECLGTLANLTI, DDSC…QMVF, and HQAT…IIAE.

In terms of assembly, interacts with SMC3 subunit of the cohesin complex. Heterotrimer of KIFAP3, KIF3A and KIF3B. Interacts with RAP1GDS1/SMG GDS. Post-translationally, phosphorylated on tyrosine residues by SRC in vitro; this reduces the binding affinity of the protein for RAP1GDS1.

In terms of biological role, involved in tethering the chromosomes to the spindle pole and in chromosome movement. Binds to the tail domain of the KIF3A/KIF3B heterodimer to form a heterotrimeric KIF3 complex and may regulate the membrane binding of this complex. The protein is Kinesin-associated protein 3 (Kifap3) of Mus musculus (Mouse).